The primary structure comprises 511 residues: Exodeoxyribonuclease 7 large subunit (511 aa).

This sequence belongs to the XseA family. In terms of assembly, heterooligomer composed of large and small subunits.

It localises to the cytoplasm. The enzyme catalyses Exonucleolytic cleavage in either 5'- to 3'- or 3'- to 5'-direction to yield nucleoside 5'-phosphates.. Bidirectionally degrades single-stranded DNA into large acid-insoluble oligonucleotides, which are then degraded further into small acid-soluble oligonucleotides. The polypeptide is Exodeoxyribonuclease 7 large subunit (Brucella canis (strain ATCC 23365 / NCTC 10854 / RM-666)).